The primary structure comprises 553 residues: Glutamyl-tRNA(Gln) amidotransferase subunit B, mitochondrial (553 aa).

The N-terminal 18 residues, 1-18, are a transit peptide targeting the mitochondrion; it reads MAASTSGYSGVLFRLRKY.

The protein belongs to the GatB/GatE family. GatB subfamily. As to quaternary structure, subunit of the heterotrimeric GatCAB amidotransferase (AdT) complex, composed of A (qrsl1), B (gatb) and C (gatc) subunits.

The protein localises to the mitochondrion. The enzyme catalyses L-glutamyl-tRNA(Gln) + L-glutamine + ATP + H2O = L-glutaminyl-tRNA(Gln) + L-glutamate + ADP + phosphate + H(+). Its function is as follows. Allows the formation of correctly charged Gln-tRNA(Gln) through the transamidation of misacylated Glu-tRNA(Gln) in the mitochondria. The reaction takes place in the presence of glutamine and ATP through an activated gamma-phospho-Glu-tRNA(Gln). In Danio rerio (Zebrafish), this protein is Glutamyl-tRNA(Gln) amidotransferase subunit B, mitochondrial.